Reading from the N-terminus, the 842-residue chain is Glucans biosynthesis glucosyltransferase H (842 aa).

The next 7 membrane-spanning stretches (helical) occupy residues 140 to 160, 194 to 214, 513 to 533, 568 to 588, 615 to 635, 656 to 676, and 680 to 700; these read ILLL…KTIL, ILIL…TALM, VFLT…FLAL, IALF…SIIL, VLLA…AFLG, FMRH…MAWL, and FLFW…VSAI.

The protein belongs to the glycosyltransferase 2 family. OpgH subfamily.

Its subcellular location is the cell inner membrane. Its pathway is glycan metabolism; osmoregulated periplasmic glucan (OPG) biosynthesis. Involved in the biosynthesis of osmoregulated periplasmic glucans (OPGs). The protein is Glucans biosynthesis glucosyltransferase H of Klebsiella pneumoniae subsp. pneumoniae (strain ATCC 700721 / MGH 78578).